The following is a 133-amino-acid chain: Peptide methionine sulfoxide reductase MsrB (133 aa).

The MsrB domain maps to leucine 8 to arginine 130. 4 residues coordinate Zn(2+): cysteine 47, cysteine 50, cysteine 96, and cysteine 99. The active-site Nucleophile is the cysteine 119.

This sequence belongs to the MsrB Met sulfoxide reductase family. Zn(2+) serves as cofactor.

The catalysed reaction is L-methionyl-[protein] + [thioredoxin]-disulfide + H2O = L-methionyl-(R)-S-oxide-[protein] + [thioredoxin]-dithiol. This Azotobacter vinelandii (strain DJ / ATCC BAA-1303) protein is Peptide methionine sulfoxide reductase MsrB.